The primary structure comprises 511 residues: 60 kDa neurofilament protein (511 aa).

A disordered region spans residues 1 to 32 (MSVTQKKTEISTTTTYEGESRPSSGMSGFSYS). Residues 1–99 (MSVTQKKTEI…KANREREKQD (99 aa)) form a head region. Residues 21–30 (RPSSGMSGFS) are compositionally biased toward polar residues. In terms of domain architecture, IF rod spans 96-449 (EKQDMRDLNE…KLLEGEESRV (354 aa)). A coil 1A region spans residues 100–135 (MRDLNERFANYIEKVRFLEAQNKKLAGELEELKSKW). The segment at 136–145 (GKETSAIKEM) is linker 1. A coil 1B region spans residues 146 to 284 (YETELEEARK…VHAQELKELA (139 aa)). The segment at 285 to 303 (ALAYRDTTAENREFWRNEL) is linker 12. Residues 304-449 (AQAIRDIQQE…KLLEGEESRV (146 aa)) form a coil 2 region. Residues 450-511 (GMKQIVEQVV…EEKKSMGSSD (62 aa)) form a tail region. Residues 479–511 (GYEATGGITTTTTTSSQERRSMSEEKKSMGSSD) form a disordered region. Residues 483 to 492 (TGGITTTTTT) are compositionally biased toward low complexity. Residues 495–511 (QERRSMSEEKKSMGSSD) are compositionally biased toward basic and acidic residues.

It belongs to the intermediate filament family.

Major squid neurofilament protein. The protein is 60 kDa neurofilament protein of Doryteuthis pealeii (Longfin inshore squid).